Here is a 334-residue protein sequence, read N- to C-terminus: Porphobilinogen deaminase (334 aa).

C250 is subject to S-(dipyrrolylmethanemethyl)cysteine.

The protein belongs to the HMBS family. As to quaternary structure, monomer. Dipyrromethane is required as a cofactor.

The enzyme catalyses 4 porphobilinogen + H2O = hydroxymethylbilane + 4 NH4(+). It functions in the pathway porphyrin-containing compound metabolism; protoporphyrin-IX biosynthesis; coproporphyrinogen-III from 5-aminolevulinate: step 2/4. Its function is as follows. Tetrapolymerization of the monopyrrole PBG into the hydroxymethylbilane pre-uroporphyrinogen in several discrete steps. The chain is Porphobilinogen deaminase from Cutibacterium acnes (strain DSM 16379 / KPA171202) (Propionibacterium acnes).